Consider the following 126-residue polypeptide: RutC family protein PH0854 (126 aa).

This sequence belongs to the RutC family.

The protein is RutC family protein PH0854 of Pyrococcus horikoshii (strain ATCC 700860 / DSM 12428 / JCM 9974 / NBRC 100139 / OT-3).